The following is a 247-amino-acid chain: MEMAPAAQVASNPRTVEDIFKDYSARRGALVRALTSDVDEFFGLCDPDKENLCLYGLANGSWEVALPAEEVPPELPEPALGINFARDGMNRRDWLSLVAVHSDSWLVSVAFFFAARLNGNERKRLFNMINDLPTVYEALVDRKHVRDRSGVDSSGKSKHSTKRTGEGQVKRSRVVAEEYEDDDEEHNETFCGTCGGLYNANEFWIGCDICERWFHGKCVRITPAKAEHIKHYKCPDCSSSSSKKTRL.

A disordered region spans residues 147 to 178; it reads DRSGVDSSGKSKHSTKRTGEGQVKRSRVVAEE. Residues 188–240 form a PHD-type zinc finger; that stretch reads ETFCGTCGGLYNANEFWIGCDICERWFHGKCVRITPAKAEHIKHYKCPDCSSS.

This sequence belongs to the Alfin family. In terms of assembly, interacts with H3K4me3 and to a lesser extent with H3K4me2.

The protein resides in the nucleus. In terms of biological role, histone-binding component that specifically recognizes H3 tails trimethylated on 'Lys-4' (H3K4me3), which mark transcription start sites of virtually all active genes. In Oryza sativa subsp. indica (Rice), this protein is PHD finger protein ALFIN-LIKE 3.